Consider the following 696-residue polypeptide: Probable E3 ubiquitin ligase complex SCF subunit sconB (696 aa).

Over residues 1–12 the composition is skewed to basic and acidic residues; it reads MDAHELSFRDGH. Residues 1–72 are disordered; it reads MDAHELSFRD…HSFNTQKPIR (72 aa). The segment covering 55-69 has biased composition (polar residues); sequence PGSTQDKPHSFNTQK. The F-box domain occupies 193–239; it reads IDFLTALPPEISFKILCYLDTTSLCKAAQVSRRWRALADDDVVWHRM. Positions 290 to 314 are disordered; the sequence is SATIETAAAGSKRKPESGKEDTAMV. The segment covering 302 to 313 has biased composition (basic and acidic residues); that stretch reads RKPESGKEDTAM. WD repeat units lie at residues 365–402, 405–444, 446–482, 484–525, 579–622, 623–662, and 665–696; these read GHSN…ELRT, GHQS…STYS, HRGG…TCLL, GHTD…RTFH, DTPS…CLRT, FFGH…CERT, and GHSG…SFQT. Residues 554-596 form a disordered region; it reads NVSVTSGDSPAASPQALPGFDGQTSDTPSSAFGPAFDDGRPSP.

Belongs to the WD repeat MET30/SCONB/SCON-2 family. Component of the SCF(sconB) E3 ubiquitin ligase complex.

It functions in the pathway protein modification; protein ubiquitination. Its function is as follows. Component of the SCF(sconB) E3 ubiquitin ligase complex involved in the regulation of sulfur metabolite repression, probably by mediating the inactivation or degradation of the metR transcription factor. In Aspergillus fumigatus (strain ATCC MYA-4609 / CBS 101355 / FGSC A1100 / Af293) (Neosartorya fumigata), this protein is Probable E3 ubiquitin ligase complex SCF subunit sconB (sconB).